The following is a 443-amino-acid chain: Putative rhamnogalacturonase D (443 aa).

The signal sequence occupies residues 1–16 (MLVTSLIALLPAIAAA). Cysteine 37 and cysteine 63 are disulfide-bonded. Asparagine 47, asparagine 103, asparagine 124, and asparagine 152 each carry an N-linked (GlcNAc...) asparagine glycan. The active-site Proton donor is aspartate 215. A disulfide bridge connects residues cysteine 217 and cysteine 234. Residues asparagine 235, asparagine 250, asparagine 263, asparagine 276, and asparagine 281 are each glycosylated (N-linked (GlcNAc...) asparagine). An intrachain disulfide couples cysteine 338 to cysteine 344. N-linked (GlcNAc...) asparagine glycosylation occurs at asparagine 346. A disulfide bond links cysteine 366 and cysteine 375. Asparagine 380 carries an N-linked (GlcNAc...) asparagine glycan.

Belongs to the glycosyl hydrolase 28 family.

The protein localises to the secreted. In terms of biological role, pectinolytic enzymes consist of four classes of enzymes: pectine lyase, polygalacturonase, pectin methylesterase and rhamnogalacturonase. Hydrolyzes alpha-D-galacturonopyranosyl-(1,2)-alpha-L-rhamnopyranosyl linkages in the backbone of the hairy regions of pectins. The polypeptide is Putative rhamnogalacturonase D (rhgD) (Aspergillus niger (strain ATCC MYA-4892 / CBS 513.88 / FGSC A1513)).